The following is an 885-amino-acid chain: DNA mismatch repair protein MutS (885 aa).

626–633 (GPNMGGKS) is a binding site for ATP.

This sequence belongs to the DNA mismatch repair MutS family.

Functionally, this protein is involved in the repair of mismatches in DNA. It is possible that it carries out the mismatch recognition step. This protein has a weak ATPase activity. The protein is DNA mismatch repair protein MutS of Burkholderia cenocepacia (strain ATCC BAA-245 / DSM 16553 / LMG 16656 / NCTC 13227 / J2315 / CF5610) (Burkholderia cepacia (strain J2315)).